The sequence spans 377 residues: N-acetyldiaminopimelate deacetylase (377 aa).

D69 is an active-site residue. Residue E128 is the Proton acceptor of the active site.

The protein belongs to the peptidase M20A family. N-acetyldiaminopimelate deacetylase subfamily.

The enzyme catalyses N-acetyl-(2S,6S)-2,6-diaminopimelate + H2O = (2S,6S)-2,6-diaminopimelate + acetate. Its pathway is amino-acid biosynthesis; L-lysine biosynthesis via DAP pathway; LL-2,6-diaminopimelate from (S)-tetrahydrodipicolinate (acetylase route): step 3/3. Catalyzes the conversion of N-acetyl-diaminopimelate to diaminopimelate and acetate. In Brevibacillus brevis (strain 47 / JCM 6285 / NBRC 100599), this protein is N-acetyldiaminopimelate deacetylase.